The sequence spans 368 residues: 3-isopropylmalate dehydrogenase (368 aa).

79-91 (GPEWGTSSTVRPE) is an NAD(+) binding site. 4 residues coordinate substrate: Arg-98, Arg-108, Arg-137, and Asp-226. Mg(2+) contacts are provided by Asp-226, Asp-251, and Asp-255. NAD(+) is bound at residue 291-303 (GSAPDISGKGIVN).

Belongs to the isocitrate and isopropylmalate dehydrogenases family. In terms of assembly, homodimer. The cofactor is Mg(2+). Requires Mn(2+) as cofactor.

The protein localises to the cytoplasm. It catalyses the reaction (2R,3S)-3-isopropylmalate + NAD(+) = 4-methyl-2-oxopentanoate + CO2 + NADH. It functions in the pathway amino-acid biosynthesis; L-leucine biosynthesis; L-leucine from 3-methyl-2-oxobutanoate: step 3/4. Functionally, catalyzes the oxidation of 3-carboxy-2-hydroxy-4-methylpentanoate (3-isopropylmalate) to 3-carboxy-4-methyl-2-oxopentanoate. The product decarboxylates to 4-methyl-2 oxopentanoate. The chain is 3-isopropylmalate dehydrogenase (leu-1) from Neurospora crassa (strain ATCC 24698 / 74-OR23-1A / CBS 708.71 / DSM 1257 / FGSC 987).